A 1135-amino-acid polypeptide reads, in one-letter code: MKFGESLQLALIPEFAEQYVDYNGIKRKIQLVAALPEDERKKLLRRNSDGSWPKGSIDEMLENDLQKVVNLFNTRIVQLDNYVTRLSTEKSPNTEITQALSSSYEAEEKAKQLKELDFRLQQLSSFCEWNKLAFEKLAANMDKHLGTERLVTFYEQKVCKLDFANSSKIYESMIALKALNSSQNDSEVKDKLEKLSIHHPLKKDLLAFIQLDIAAEVVTACINAPDSVLVDILAASIIAGAKACMREVIGRIGLRSECLASALRRAINNLCGPDEGVLYFLEVLKQICSVVYVDSYHSNRLLSRILLVERNSKGQSVMHSVAKLGWAGLCSKFCEIVSSIPDSEPLNWMLPCWRDVMHDTPLTLAIKGNHVEALHALLSAQDKETTSTKPGPVPPLVLTCCVGDYDLIVEELILAGFNPNEVDASSNTALHTAVRYNRPECVKMLLKLGANPSARDFLNSWTPLMLASATGLSEIVSILVASGASVDEVDSSGWTAMEQAVVRGYLHLADKLRTQVALSDKPVNLHTLYIKASSSEMRSRKRAMDLQLSRSVVIIRISDLAGRIRVSLQGDDAVYVSGRSPSFAASRPSSVDFMSQSTDSLSKNDTTASNGSMTPSSSQNNSVIIDIPRSHFDNAGEVCLENLAEPDEIADDSIHLHYDAAQENSPQPVNGSSPPYELVFVTRNTEEATITIDLLANRSHKILGRTVCCLTSLVSDLGNHMQSLKPLAPLPLLSSKTLKPIAHVNADVLISKVTVDDRFSSNDGISTPALSLEAVSNVSRTALEDAERSLHKSATTTSESGKSNGVAVIGHRGLGKNQPDRLSLQLGENTLQSFIKAADLGASYVELDVQMTKDMVPVVYHDFIVNETGTDAQVHSLTLEQFLGASHSPSEEIKDDASDIQQKRRPRAYSSSFTPSGSQVNFGEFAEENARLKPKVYKGNALGHTICAPFTTLKDVLKEVPQSVGLNVEFKYPMLSEAEEEKLLPIAYDYNFYVDTILSIIKKYGGKRKYIFSSFNPDICILLSLKSTNPVLFLTEGGTAYRTDVRAASLRQALKFASQWSFLGIVSACEPLIMCPRLIKAVKQLGLSCYTYGVLNNDVDNVRRQVRFGVDAVIVDNVLAIRRALNQYDESLESD.

Residues 60–155 (MLENDLQKVV…GTERLVTFYE (96 aa)) form the SPX domain. 5 ANK repeats span residues 357–386 (MHDT…KETT), 391–421 (GPVP…NPNE), 425–454 (SSNT…NPSA), 459–488 (NSWT…SVDE), and 492–521 (SGWT…LSDK). Serine 580 and serine 582 each carry phosphoserine. Disordered regions lie at residues 583–621 (FAAS…SQNN) and 786–821 (AERS…QPDR). Composition is skewed to polar residues over residues 592 to 621 (DFMS…SQNN) and 792 to 803 (KSATTTSESGKS). Residues 806–1125 (VAVIGHRGLG…DNVLAIRRAL (320 aa)) form the GP-PDE domain. A divalent metal cation contacts are provided by glutamate 846, aspartate 848, and histidine 861. The tract at residues 888-915 (SPSEEIKDDASDIQQKRRPRAYSSSFTP) is disordered. Phosphoserine is present on residues serine 910, serine 911, and serine 912.

It belongs to the GDE1 family. A divalent metal cation is required as a cofactor.

Its subcellular location is the cytoplasm. The catalysed reaction is sn-glycerol 3-phosphocholine + H2O = sn-glycerol 3-phosphate + choline + H(+). Its function is as follows. Glycerophosphocholine glycerophosphodiesterase responsible for the hydrolysis of intracellular glycerophosphocholine into glycerol-phosphate and choline. The choline is used for phosphatidyl-choline synthesis. Required for utilization of glycerophosphocholine as phosphate source. The chain is Glycerophosphocholine phosphodiesterase gde1 (gde1) from Schizosaccharomyces pombe (strain 972 / ATCC 24843) (Fission yeast).